The following is a 1026-amino-acid chain: Beta-galactosidase (1026 aa).

Residue Glu458 is the Proton donor of the active site. Residue Glu546 is the Nucleophile of the active site.

Belongs to the glycosyl hydrolase 2 family.

It catalyses the reaction Hydrolysis of terminal non-reducing beta-D-galactose residues in beta-D-galactosides.. The sequence is that of Beta-galactosidase (lacZ) from Streptococcus thermophilus.